The sequence spans 296 residues: Protoheme IX farnesyltransferase 2 (296 aa).

Helical transmembrane passes span 7-27 (LLVA…GGYF), 36-56 (PMLL…GCVL), 83-103 (LKAA…LLWW), 108-128 (LTTA…SLWF), 134-154 (YGTL…YCAV), 163-183 (ASLL…IAIF), 207-227 (IHIV…CLGG), 229-249 (AGYG…AIAL), and 265-285 (FAFS…DFQV).

This sequence belongs to the UbiA prenyltransferase family. Protoheme IX farnesyltransferase subfamily.

Its subcellular location is the cell inner membrane. It catalyses the reaction heme b + (2E,6E)-farnesyl diphosphate + H2O = Fe(II)-heme o + diphosphate. It functions in the pathway porphyrin-containing compound metabolism; heme O biosynthesis; heme O from protoheme: step 1/1. In terms of biological role, converts heme B (protoheme IX) to heme O by substitution of the vinyl group on carbon 2 of heme B porphyrin ring with a hydroxyethyl farnesyl side group. In Pseudomonas paraeruginosa (strain DSM 24068 / PA7) (Pseudomonas aeruginosa (strain PA7)), this protein is Protoheme IX farnesyltransferase 2.